Consider the following 536-residue polypeptide: Zinc finger protein 623 (536 aa).

Residues 57 to 77 (GELLGNPEGQSLGSSPSQDRG) are disordered. Positions 64 to 74 (EGQSLGSSPSQ) are enriched in polar residues. 13 C2H2-type zinc fingers span residues 123–145 (NPCD…RISH), 151–173 (YTCD…QRIH), 179–201 (YVCN…QRVH), 207–229 (FKCA…QRVH), 235–257 (FECK…QRIH), 263–285 (YECN…YQIH), 291–313 (YECK…QRIH), 319–341 (FECN…QRIH), 347–369 (YVCN…QRIH), 375–397 (YECN…QKIH), 403–425 (YECK…QKIH), 431–453 (FECK…QIIH), and 459–481 (YVCS…QKIH). K445 participates in a covalent cross-link: Glycyl lysine isopeptide (Lys-Gly) (interchain with G-Cter in SUMO2). The tract at residues 513 to 536 (LSLSKAPIHLGERSVDKGEHTGNL) is disordered. Residues 522–536 (LGERSVDKGEHTGNL) show a composition bias toward basic and acidic residues.

Belongs to the krueppel C2H2-type zinc-finger protein family.

It localises to the nucleus. May be involved in transcriptional regulation. The sequence is that of Zinc finger protein 623 (ZNF623) from Homo sapiens (Human).